We begin with the raw amino-acid sequence, 130 residues long: Ribosome-binding factor A (130 aa).

Belongs to the RbfA family. Monomer. Binds 30S ribosomal subunits, but not 50S ribosomal subunits or 70S ribosomes.

Its subcellular location is the cytoplasm. Functionally, one of several proteins that assist in the late maturation steps of the functional core of the 30S ribosomal subunit. Associates with free 30S ribosomal subunits (but not with 30S subunits that are part of 70S ribosomes or polysomes). Required for efficient processing of 16S rRNA. May interact with the 5'-terminal helix region of 16S rRNA. The protein is Ribosome-binding factor A of Roseiflexus sp. (strain RS-1).